Reading from the N-terminus, the 261-residue chain is Glutamate racemase (261 aa).

Residues 12–13 and 44–45 contribute to the substrate site; these read DS and YG. The active-site Proton donor/acceptor is C76. Position 77 to 78 (77 to 78) interacts with substrate; it reads NT. C180 (proton donor/acceptor) is an active-site residue. 181–182 contributes to the substrate binding site; that stretch reads TH.

It belongs to the aspartate/glutamate racemases family.

The catalysed reaction is L-glutamate = D-glutamate. Its pathway is cell wall biogenesis; peptidoglycan biosynthesis. Provides the (R)-glutamate required for cell wall biosynthesis. This chain is Glutamate racemase, found in Borreliella burgdorferi (strain ATCC 35210 / DSM 4680 / CIP 102532 / B31) (Borrelia burgdorferi).